The primary structure comprises 465 residues: Cruciform DNA-recognizing protein 1 (465 aa).

2 disordered regions span residues 107–227 (EAGG…VPNP) and 247–276 (RLNK…ALPQ). Positions 127 to 151 (NRKKNKRNNKKRRSKLKKKSTKNNK) are enriched in basic residues. Phosphoserine is present on residues Ser153 and Ser156. Positions 156 to 165 (SLDDNEEEDG) are enriched in acidic residues. Positions 160–161 (NE) are X-DNA-binding. Low complexity predominate over residues 166 to 177 (VTGTTTEDVTGT). Phosphothreonine is present on Thr182. A Phosphoserine modification is found at Ser271. Thr295 is subject to Phosphothreonine. The segment at 300–465 (AVTPLINEPE…FFGKLKKLFK (166 aa)) is disordered. Residues Ser319 and Ser343 each carry the phosphoserine modification. Positions 337 to 363 (LVEKRESTEGVLDGSKKVENKAKKDEE) are enriched in basic and acidic residues. Phosphothreonine is present on Thr366. Basic and acidic residues-rich tracts occupy residues 385–398 (AEGR…EEKE) and 404–428 (EKGS…EVKK). Ser394 carries the post-translational modification Phosphoserine. Ser440 carries the post-translational modification Phosphoserine. The segment covering 451 to 465 (KKKTGFFGKLKKLFK) has biased composition (basic residues).

It belongs to the CRP1/MDG1 family. Cleaved in the vicinity of position 160 to give an X-DNA-binding N-terminal subpeptide and a non-DNA-binding C-terminal subpeptide.

Functionally, cruciform DNA-binding protein which exerts an enhancing effect on the cleavage of cruciform DNA (X-DNA) by endonuclease VII from bacteriophage T4. This chain is Cruciform DNA-recognizing protein 1 (CRP1), found in Saccharomyces cerevisiae (strain ATCC 204508 / S288c) (Baker's yeast).